The chain runs to 324 residues: MKKEDLRIVYMGTPDFAVEALQCLVEGGYNVVGVITMPDKPAGRGHKIQYSPVKQYALDHQLPLLQPEKLKDEEFIQALREWKADLQIVVAFRMLPEVVWNMPRLGTFNLHASLLPQYRGAAPINWAVINGDTETGITTFFLKHEIDTGEVIQQVRIPIADTDNVEIVHDKLMHLGGRLVIETVDAILEGKVKSIPQEEMAVAGELRPAPKIFKETCRIDWNQPVKRVYDFIRGLSPYPAAWSELVNPEGEAVVVKIFESEKLPKVHTLAPGSIVTDGKNFLRVAVPDGFVNVLSLQLPGKKRLKTDELLRGFHLTEAFKMKAV.

113-116 contributes to the (6S)-5,6,7,8-tetrahydrofolate binding site; sequence SLLP.

The protein belongs to the Fmt family.

It catalyses the reaction L-methionyl-tRNA(fMet) + (6R)-10-formyltetrahydrofolate = N-formyl-L-methionyl-tRNA(fMet) + (6S)-5,6,7,8-tetrahydrofolate + H(+). Functionally, attaches a formyl group to the free amino group of methionyl-tRNA(fMet). The formyl group appears to play a dual role in the initiator identity of N-formylmethionyl-tRNA by promoting its recognition by IF2 and preventing the misappropriation of this tRNA by the elongation apparatus. This chain is Methionyl-tRNA formyltransferase, found in Bacteroides fragilis (strain ATCC 25285 / DSM 2151 / CCUG 4856 / JCM 11019 / LMG 10263 / NCTC 9343 / Onslow / VPI 2553 / EN-2).